The primary structure comprises 477 residues: Trigger factor (477 aa).

Positions 163-248 constitute a PPIase FKBP-type domain; it reads ENLVIFDYKA…ITEVKKSEEV (86 aa). Positions 408–461 are enriched in basic and acidic residues; sequence KAKPSKKEISKEEAEKILKEHQKQDHNHEHDHNHDHDHPEEKKASKSTKIEKKP. Residues 408–477 are disordered; sequence KAKPSKKEIS…KPSTKKVSKK (70 aa).

The protein belongs to the FKBP-type PPIase family. Tig subfamily.

The protein resides in the cytoplasm. The catalysed reaction is [protein]-peptidylproline (omega=180) = [protein]-peptidylproline (omega=0). Functionally, involved in protein export. Acts as a chaperone by maintaining the newly synthesized protein in an open conformation. Functions as a peptidyl-prolyl cis-trans isomerase. This is Trigger factor from Pelagibacter ubique (strain HTCC1062).